Consider the following 73-residue polypeptide: Large ribosomal subunit protein bL31c (73 aa).

This sequence belongs to the bacterial ribosomal protein bL31 family. Type A subfamily. Part of the 50S ribosomal subunit.

The protein localises to the plastid. The protein resides in the chloroplast. Functionally, binds the 23S rRNA. The sequence is that of Large ribosomal subunit protein bL31c from Palmaria palmata (Dulse).